The primary structure comprises 125 residues: uncharacterized protein (125 aa).

Residues 50-73 (QTSDFSDESSRSDSSSVTNENEVS) are disordered.

This is an uncharacterized protein from Microplitis demolitor (Parasitoid wasp).